A 97-amino-acid chain; its full sequence is Large ribosomal subunit protein eL21 (97 aa).

This sequence belongs to the eukaryotic ribosomal protein eL21 family.

The sequence is that of Large ribosomal subunit protein eL21 from Methanococcus aeolicus (strain ATCC BAA-1280 / DSM 17508 / OCM 812 / Nankai-3).